The primary structure comprises 313 residues: ADP-L-glycero-D-manno-heptose-6-epimerase (313 aa).

Residues 10–11, 31–32, K38, R53, 75–79, and N92 contribute to the NADP(+) site; these read MI, DN, and EGACS. Catalysis depends on Y139, which acts as the Proton acceptor. Residue K143 participates in NADP(+) binding. N174 contributes to the substrate binding site. NADP(+) is bound by residues V175 and K183. The active-site Proton acceptor is K183. Substrate contacts are provided by residues S185, H192, 206–209, R214, and Y277; that span reads FEGS.

The protein belongs to the NAD(P)-dependent epimerase/dehydratase family. HldD subfamily. In terms of assembly, homopentamer. NADP(+) is required as a cofactor.

It carries out the reaction ADP-D-glycero-beta-D-manno-heptose = ADP-L-glycero-beta-D-manno-heptose. The protein operates within nucleotide-sugar biosynthesis; ADP-L-glycero-beta-D-manno-heptose biosynthesis; ADP-L-glycero-beta-D-manno-heptose from D-glycero-beta-D-manno-heptose 7-phosphate: step 4/4. Its pathway is bacterial outer membrane biogenesis; LPS core biosynthesis. Functionally, catalyzes the interconversion between ADP-D-glycero-beta-D-manno-heptose and ADP-L-glycero-beta-D-manno-heptose via an epimerization at carbon 6 of the heptose. This Vibrio parahaemolyticus serotype O3:K6 (strain RIMD 2210633) protein is ADP-L-glycero-D-manno-heptose-6-epimerase.